The sequence spans 132 residues: Ribosome-binding factor A (132 aa).

Belongs to the RbfA family. Monomer. Binds 30S ribosomal subunits, but not 50S ribosomal subunits or 70S ribosomes.

The protein resides in the cytoplasm. Its function is as follows. One of several proteins that assist in the late maturation steps of the functional core of the 30S ribosomal subunit. Associates with free 30S ribosomal subunits (but not with 30S subunits that are part of 70S ribosomes or polysomes). Required for efficient processing of 16S rRNA. May interact with the 5'-terminal helix region of 16S rRNA. The sequence is that of Ribosome-binding factor A from Edwardsiella ictaluri (strain 93-146).